The sequence spans 87 residues: RNA-binding protein Hfq (87 aa).

Residues aspartate 9–valine 68 form the Sm domain.

Belongs to the Hfq family. As to quaternary structure, homohexamer.

Functionally, RNA chaperone that binds small regulatory RNA (sRNAs) and mRNAs to facilitate mRNA translational regulation in response to envelope stress, environmental stress and changes in metabolite concentrations. Also binds with high specificity to tRNAs. The chain is RNA-binding protein Hfq from Pseudoalteromonas translucida (strain TAC 125).